The following is a 257-amino-acid chain: uncharacterized protein (257 aa).

An N-terminal signal peptide occupies residues 1 to 22; it reads MIHSKRLRLWLYLVLLAVFIGA. Cys23 carries N-palmitoyl cysteine lipidation. Cys23 carries the S-diacylglycerol cysteine lipid modification.

This sequence belongs to the staphylococcal tandem lipoprotein family.

It localises to the cell membrane. This is an uncharacterized protein from Staphylococcus aureus (strain NCTC 8325 / PS 47).